A 741-amino-acid polypeptide reads, in one-letter code: Fibrinogen alpha chain (741 aa).

The signal sequence occupies residues 1-18; sequence MIPVTILCVLLCLNLAWA. Residue Q19 is modified to Pyrrolidone carboxylic acid. Residues 67-506 are a coiled coil; sequence CCRMQGIIDD…STRRSYNGKD (440 aa). A disordered region spans residues 270–307; it reads VAEARGDSSPSHTGKLITSSHRRESPSLVDKTSSASSV. Positions 277 to 288 are enriched in polar residues; it reads SSPSHTGKLITS. An intrachain disulfide couples C310 to C341. Composition is skewed to low complexity over residues 381–398 and 435–449; these read STSS…HVTG and SASH…SSSS. The disordered stretch occupies residues 381-510; it reads STSSRHSIGS…SYNGKDCDDI (130 aa). The segment covering 450-459 has biased composition (polar residues); that stretch reads FNKGGSTFET. A Fibrinogen C-terminal domain is found at 498-739; sequence TRRSYNGKDC…VVRMKIRPLE (242 aa). Ca(2+) is bound by residues D666, D668, W670, and E672. Cysteines 674 and 687 form a disulfide.

Heterohexamer; disulfide linked. Contains 2 sets of 3 non-identical chains (alpha, beta and gamma). The 2 heterotrimers are in head to head conformation with the N-termini in a small central domain. In terms of processing, conversion of fibrinogen to fibrin is triggered by thrombin, which cleaves fibrinopeptides A and B from alpha and beta chains, and thus exposes the N-terminal polymerization sites responsible for the formation of the soft clot. The soft clot is converted into the hard clot by factor XIIIA which catalyzes the epsilon-(gamma-glutamyl)lysine cross-linking between gamma chains (stronger) and between alpha chains (weaker) of different monomers. Post-translationally, forms F13A-mediated cross-links between a glutamine and the epsilon-amino group of a lysine residue, forming fibronectin-fibrinogen heteropolymers.

The protein localises to the secreted. In terms of biological role, cleaved by the protease thrombin to yield monomers which, together with fibrinogen beta (FGB) and fibrinogen gamma (FGG), polymerize to form an insoluble fibrin matrix. Fibrin has a major function in hemostasis as one of the primary components of blood clots. The protein is Fibrinogen alpha chain (FGA) of Gallus gallus (Chicken).